A 433-amino-acid chain; its full sequence is MNRDTSPDLHYLSGFGNEFASEALPGALPVGQNSPQKAPYGLYAELLSGTAFTMARSELRRTWLYRIRPSALHPRFERLARQPLGGPLGGINPNRLRWSPQPIPAEPTDFIEGWLPMAANAAAEKPAGVSIYIYCANRSMERVFFNADGELLLVPEQGRLRIATELGVMEVEPLEIAVIPRGMKFRVELLDGQARGYIAENHGAPLRLPDLGPIGSNGLANPRDFLTPVAHYEEAEGPVQLVQKFLGEHWACELQHSPLDVVAWHGSNVPYKYDLRRFNTIGTVSFDHPDPSIFTVLTSPTSVHGMANMDFVIFPPRWMVAENTFRPPWFHRNLMNEFMGLINGAYDAKAEGFLPGGASLHGVMSAHGPDAETCEKAIAADLAPHKIDNTMAFMFETSQVLRPSLQALECPQLQADYDSCWATLPSTFNPNRR.

Residue His-288 is the Proton acceptor of the active site. The Fe cation site is built by His-331 and Glu-337. Homogentisate contacts are provided by Tyr-346 and His-367. Position 367 (His-367) interacts with Fe cation.

This sequence belongs to the homogentisate dioxygenase family. As to quaternary structure, hexamer; dimer of trimers. Fe cation is required as a cofactor.

It carries out the reaction homogentisate + O2 = 4-maleylacetoacetate + H(+). It functions in the pathway amino-acid degradation; L-phenylalanine degradation; acetoacetate and fumarate from L-phenylalanine: step 4/6. Functionally, involved in the catabolism of homogentisate (2,5-dihydroxyphenylacetate or 2,5-OH-PhAc), a central intermediate in the degradation of phenylalanine and tyrosine. Catalyzes the oxidative ring cleavage of the aromatic ring of homogentisate to yield maleylacetoacetate. This chain is Homogentisate 1,2-dioxygenase, found in Pseudomonas putida (strain ATCC 700007 / DSM 6899 / JCM 31910 / BCRC 17059 / LMG 24140 / F1).